Here is a 158-residue protein sequence, read N- to C-terminus: NADH-quinone oxidoreductase subunit B (158 aa).

Positions 36, 37, 101, and 131 each coordinate [4Fe-4S] cluster.

It belongs to the complex I 20 kDa subunit family. In terms of assembly, NDH-1 is composed of 14 different subunits. Subunits NuoB, C, D, E, F, and G constitute the peripheral sector of the complex. [4Fe-4S] cluster is required as a cofactor.

It localises to the cell inner membrane. The catalysed reaction is a quinone + NADH + 5 H(+)(in) = a quinol + NAD(+) + 4 H(+)(out). Functionally, NDH-1 shuttles electrons from NADH, via FMN and iron-sulfur (Fe-S) centers, to quinones in the respiratory chain. The immediate electron acceptor for the enzyme in this species is believed to be ubiquinone. Couples the redox reaction to proton translocation (for every two electrons transferred, four hydrogen ions are translocated across the cytoplasmic membrane), and thus conserves the redox energy in a proton gradient. The chain is NADH-quinone oxidoreductase subunit B from Francisella tularensis subsp. tularensis (strain FSC 198).